The sequence spans 510 residues: MIWHVQNENFILDSTRIFMKAFHLLLFDGSFIFPECILIFGLILLLMIDSTSDQKDIPWLYFISSTSLVMSITALLFRWREEPMISFSGNFQTNNFNEIFQFLILLCSTLCIPLSVEYIECTEMAITEFLLFVLTATLGGMFLCGANDLITIFVAPECFSLCSYLLSGYTKKDVRSNEATTKYLLMGGASSSILVHAFSWLYGSSGGEIELQEIVNGLINTQMYNSPGISIALIFITVGIGFKLSLAPSHQWTPDVYEGSPTPVVAFLSVTSKVAASASATRIFDIPFYFSSNEWHLLLEILAILSMIVGNLIAITQTSMKRMLAYSSIGQIGYVIIGIIVGDSNGGYASMITYMLFYISMNLGTFACIVLFGLRTGTDNIRDYAGLYTKDPFLALSLALCLLSLGGLPPLAGFFGKLHLFWCGWQAGLYFLVLIGLLTSVVSIYYYLKIIKLLMTGRNQEITPHVRNYRRSPLRSNNSIELSMIVCVIASTIPGISMNPIVEIAQDTLF.

13 helical membrane passes run 24–44, 57–77, 99–119, 124–144, 149–169, 183–203, 227–247, 295–315, 323–343, 354–374, 395–415, 418–438, and 482–502; these read LLLF…GLIL, IPWL…ALLF, IFQF…VEYI, MAIT…MFLC, LITI…LSGY, YLLM…WLYG, PGIS…LSLA, WHLL…LIAI, MLAY…IVGD, YMLF…LFGL, ALSL…AGFF, LHLF…IGLL, and LSMI…NPIV.

This sequence belongs to the complex I subunit 2 family. As to quaternary structure, NDH is composed of at least 16 different subunits, 5 of which are encoded in the nucleus.

The protein resides in the plastid. The protein localises to the chloroplast thylakoid membrane. It catalyses the reaction a plastoquinone + NADH + (n+1) H(+)(in) = a plastoquinol + NAD(+) + n H(+)(out). It carries out the reaction a plastoquinone + NADPH + (n+1) H(+)(in) = a plastoquinol + NADP(+) + n H(+)(out). NDH shuttles electrons from NAD(P)H:plastoquinone, via FMN and iron-sulfur (Fe-S) centers, to quinones in the photosynthetic chain and possibly in a chloroplast respiratory chain. The immediate electron acceptor for the enzyme in this species is believed to be plastoquinone. Couples the redox reaction to proton translocation, and thus conserves the redox energy in a proton gradient. This chain is NAD(P)H-quinone oxidoreductase subunit 2 B, chloroplastic, found in Manihot esculenta (Cassava).